The following is a 100-amino-acid chain: Cysteine-rich venom protein VAR1 (100 aa).

A signal peptide spans 1-22; the sequence is MILLKLYLTLAAILCQSRGTTS. The region spanning 41–81 is the SCP domain; sequence NKHNDLRRTVDPPAKNMLKMSWDNIIAESAKRAALRCNQNE.

Belongs to the CRISP family. Post-translationally, contains 8 disulfide bonds. Expressed by the venom gland.

It is found in the secreted. Its function is as follows. Blocks ryanodine receptors, and potassium channels. The sequence is that of Cysteine-rich venom protein VAR1 from Varanus acanthurus (Ridge-tailed monitor).